Consider the following 185-residue polypeptide: Large ribosomal subunit protein uL30 (185 aa).

Belongs to the universal ribosomal protein uL30 family. Part of the 50S ribosomal subunit.

This Caldivirga maquilingensis (strain ATCC 700844 / DSM 13496 / JCM 10307 / IC-167) protein is Large ribosomal subunit protein uL30.